Reading from the N-terminus, the 122-residue chain is Large ribosomal subunit protein uL14 (122 aa).

Belongs to the universal ribosomal protein uL14 family. In terms of assembly, part of the 50S ribosomal subunit. Forms a cluster with proteins L3 and L19. In the 70S ribosome, L14 and L19 interact and together make contacts with the 16S rRNA in bridges B5 and B8.

Its function is as follows. Binds to 23S rRNA. Forms part of two intersubunit bridges in the 70S ribosome. The chain is Large ribosomal subunit protein uL14 from Mesorhizobium japonicum (strain LMG 29417 / CECT 9101 / MAFF 303099) (Mesorhizobium loti (strain MAFF 303099)).